The following is a 200-amino-acid chain: Holliday junction branch migration complex subunit RuvA (200 aa).

Residues 1–63 (MIAFVRGQVA…EDSLTLFGFA (63 aa)) form a domain I region. A domain II region spans residues 64–142 (DEDEKQTFEL…APTGAGRSAG (79 aa)). The tract at residues 142-146 (GVPAP) is flexible linker. The interval 147–200 (AGAVWRDQVHQGLVGLGWPVRDAEKAVAAVAPEAGDVPDVAALLRAALRTLSKA) is domain III.

This sequence belongs to the RuvA family. Homotetramer. Forms an RuvA(8)-RuvB(12)-Holliday junction (HJ) complex. HJ DNA is sandwiched between 2 RuvA tetramers; dsDNA enters through RuvA and exits via RuvB. An RuvB hexamer assembles on each DNA strand where it exits the tetramer. Each RuvB hexamer is contacted by two RuvA subunits (via domain III) on 2 adjacent RuvB subunits; this complex drives branch migration. In the full resolvosome a probable DNA-RuvA(4)-RuvB(12)-RuvC(2) complex forms which resolves the HJ.

Its subcellular location is the cytoplasm. The RuvA-RuvB-RuvC complex processes Holliday junction (HJ) DNA during genetic recombination and DNA repair, while the RuvA-RuvB complex plays an important role in the rescue of blocked DNA replication forks via replication fork reversal (RFR). RuvA specifically binds to HJ cruciform DNA, conferring on it an open structure. The RuvB hexamer acts as an ATP-dependent pump, pulling dsDNA into and through the RuvAB complex. HJ branch migration allows RuvC to scan DNA until it finds its consensus sequence, where it cleaves and resolves the cruciform DNA. The sequence is that of Holliday junction branch migration complex subunit RuvA from Nocardioides sp. (strain ATCC BAA-499 / JS614).